The sequence spans 286 residues: MSTEITHHQAMINGYRMHYVTAGSGYPLVLLHGWPQSWYEWRNVIPALAEQFTVIAPDLRGLGDSEKPMTGFDKRTMATDVRELVSHLGYDKVGVIGHDWGGSVAFYFAYDNRDLVERLFILDMIPGLIKAGDSFPIPVALMINHIFFHGGNPDWATALISKDVNLYLRRFLTTLDYNYSPNVFSEEDIAEYVRVNSLPGSIRSGCQWYATGLREDTENLAKATDKLTIPVIAWGGSHFLGDIRPAWQEVAENVEGGAVENCGHFVPEEKPQFVIDTALKFFAPLR.

The region spanning 26 to 123 is the AB hydrolase-1 domain; that stretch reads YPLVLLHGWP…DLVERLFILD (98 aa). The active-site Nucleophile is Asp-99. The Proton donor role is filled by Tyr-209. The active-site Proton acceptor is the His-264.

Belongs to the AB hydrolase superfamily. Epoxide hydrolase family. Homotetramer.

The protein localises to the cytoplasm. It is found in the cell membrane. The enzyme catalyses an epoxide + H2O = an ethanediol. In terms of biological role, involved in catabolic degradation of epoxides. Shows highest activity towards C6 and C7 carbocyclic epoxides. Also active towards linear 1,2-epoxyalkanes. The protein is Soluble epoxide hydrolase of Corynebacterium sp. (strain C12).